A 168-amino-acid chain; its full sequence is Photosystem I assembly protein Ycf3 (168 aa).

TPR repeat units lie at residues 35–68 (AFTYYRDGMSAQSEGNYAEALQNYYEAMRLEIDP), 72–105 (SYILYNIGLIHTSNGEHTKALEYYFRALERNPFL), and 120–153 (GEQAIQQGDSEMAEAWFAQAAEYWKQAITLTPGN).

The protein belongs to the Ycf3 family. As to quaternary structure, interacts with Y3IP1.

The protein localises to the plastid. The protein resides in the chloroplast thylakoid membrane. In terms of biological role, essential for the assembly of the photosystem I (PSI) complex. May act as a chaperone-like factor to guide the assembly of the PSI subunits. This is Photosystem I assembly protein Ycf3 from Arabidopsis thaliana (Mouse-ear cress).